Consider the following 670-residue polypeptide: DNA ligase (670 aa).

Residues 35-39, 84-85, and Glu116 contribute to the NAD(+) site; these read DSVYD and SL. Lys118 acts as the N6-AMP-lysine intermediate in catalysis. The NAD(+) site is built by Arg139, Glu176, Lys293, and Lys317. Cys411, Cys414, Cys429, and Cys435 together coordinate Zn(2+). The BRCT domain occupies 592-670; it reads VVKSEIAGKT…EEAFLKLLKS (79 aa).

It belongs to the NAD-dependent DNA ligase family. LigA subfamily. It depends on Mg(2+) as a cofactor. Mn(2+) serves as cofactor.

The catalysed reaction is NAD(+) + (deoxyribonucleotide)n-3'-hydroxyl + 5'-phospho-(deoxyribonucleotide)m = (deoxyribonucleotide)n+m + AMP + beta-nicotinamide D-nucleotide.. In terms of biological role, DNA ligase that catalyzes the formation of phosphodiester linkages between 5'-phosphoryl and 3'-hydroxyl groups in double-stranded DNA using NAD as a coenzyme and as the energy source for the reaction. It is essential for DNA replication and repair of damaged DNA. The protein is DNA ligase of Coxiella burnetii (strain RSA 331 / Henzerling II).